We begin with the raw amino-acid sequence, 365 residues long: LIM and cysteine-rich domains protein 1 (365 aa).

S16 is subject to Phosphoserine. The PET domain maps to 99–206 (MIMTNPIATG…GEVALPGQGG (108 aa)). The disordered stretch occupies residues 200–235 (ALPGQGGLPKEEGKQQEKPEGAETTAATTNGSLSDP). A compositionally biased stretch (basic and acidic residues) spans 208–220 (PKEEGKQQEKPEG). 2 LIM zinc-binding domains span residues 241 to 306 (YVCE…SLRP) and 307 to 365 (RCSG…SKRS).

Interacts with GATA1 and GATA4. Interacts with beta-dystroglycan. Interacts with GATA6. In terms of tissue distribution, expressed in the heart (at protein level). Expressed in many tissues with highest abundance in skeletal muscle.

It is found in the cytoplasm. The protein localises to the nucleus. Functionally, transcriptional cofactor that restricts GATA6 function by inhibiting DNA-binding, resulting in repression of GATA6 transcriptional activation of downstream target genes. Represses GATA6-mediated trans activation of lung- and cardiac tissue-specific promoters. Inhibits DNA-binding by GATA4 and GATA1 to the cTNC promoter. Plays a critical role in the development of cardiac hypertrophy via activation of calcineurin/nuclear factor of activated T-cells signaling pathway. In Homo sapiens (Human), this protein is LIM and cysteine-rich domains protein 1 (LMCD1).